We begin with the raw amino-acid sequence, 257 residues long: Triosephosphate isomerase (257 aa).

Residues asparagine 11 and lysine 13 each coordinate substrate. The active-site Electrophile is the histidine 96. The active-site Proton acceptor is glutamate 170.

It belongs to the triosephosphate isomerase family. Homodimer.

The enzyme catalyses D-glyceraldehyde 3-phosphate = dihydroxyacetone phosphate. It participates in carbohydrate biosynthesis; gluconeogenesis. Its pathway is carbohydrate degradation; glycolysis; D-glyceraldehyde 3-phosphate from glycerone phosphate: step 1/1. The sequence is that of Triosephosphate isomerase from Giardia intestinalis (Giardia lamblia).